Reading from the N-terminus, the 319-residue chain is Aspartate carbamoyltransferase catalytic subunit (319 aa).

Arginine 57 and threonine 58 together coordinate carbamoyl phosphate. Lysine 85 contributes to the L-aspartate binding site. Positions 107, 135, and 138 each coordinate carbamoyl phosphate. Positions 168 and 222 each coordinate L-aspartate. Carbamoyl phosphate-binding residues include glycine 263 and proline 264.

Belongs to the aspartate/ornithine carbamoyltransferase superfamily. ATCase family. As to quaternary structure, heterododecamer (2C3:3R2) of six catalytic PyrB chains organized as two trimers (C3), and six regulatory PyrI chains organized as three dimers (R2).

The catalysed reaction is carbamoyl phosphate + L-aspartate = N-carbamoyl-L-aspartate + phosphate + H(+). It functions in the pathway pyrimidine metabolism; UMP biosynthesis via de novo pathway; (S)-dihydroorotate from bicarbonate: step 2/3. Catalyzes the condensation of carbamoyl phosphate and aspartate to form carbamoyl aspartate and inorganic phosphate, the committed step in the de novo pyrimidine nucleotide biosynthesis pathway. The protein is Aspartate carbamoyltransferase catalytic subunit of Paracoccus denitrificans (strain Pd 1222).